We begin with the raw amino-acid sequence, 355 residues long: Chemerin-like receptor 2 (355 aa).

Topologically, residues 1-41 are extracellular; sequence MEDLEETLFEEFENYSYALDYYSLESDLEEKVQLGVVHWVS. An N-linked (GlcNAc...) asparagine glycan is attached at Asn-14. The helical transmembrane segment at 42 to 62 threads the bilayer; that stretch reads LVLYCLSFVLGIPGNAIVIWF. Over 63–73 the chain is Cytoplasmic; that stretch reads TGFKWKKTVST. The chain crosses the membrane as a helical span at residues 74–94; it reads LWFLNLAIADFIFLLFLPLYI. Topologically, residues 95 to 112 are extracellular; it reads SYVVMNFHWPFGIWLCKA. Cys-110 and Cys-187 form a disulfide bridge. A helical membrane pass occupies residues 113 to 133; sequence NSFTAQLNMFASVFFLTVISL. Residues 134 to 154 are Cytoplasmic-facing; sequence DHYIHLIHPVLSHRHRTLKNS. The chain crosses the membrane as a helical span at residues 155 to 175; sequence LIVIIFIWLLASLIGGPALYF. Residues 176-210 lie on the Extracellular side of the membrane; it reads RDTVEFNNHTLCYNNFQKHDPDLTVIRHHVLTWVK. Residues 211–231 form a helical membrane-spanning segment; the sequence is FIVGYLFPLLTMSICYLCLIF. The Cytoplasmic segment spans residues 232–247; it reads KVKKRSILISSRHFWT. Residues 248–268 traverse the membrane as a helical segment; that stretch reads ILAVVVAFVVCWTPYHLFSIW. Residues 269-286 lie on the Extracellular side of the membrane; it reads ELTIHHNSYSHHVMQAGI. A helical transmembrane segment spans residues 287-307; sequence PLSTGLAFLNSCLNPILYVLI. The Cytoplasmic segment spans residues 308 to 355; sequence SKKFQARFRSSVAEILKYTLWEVSCSGTVSEQLRNSETKNLCLLETAQ.

This sequence belongs to the chemokine-like receptor (CMKLR) family.

The protein resides in the cell membrane. Functionally, receptor for chemoattractant adipokine chemerin/RARRES2 suggesting a role for this receptor in the regulation of inflammation and energy homesotasis. Signals mainly via beta-arrestin pathway. Binding of RARRES2 activates weakly G proteins, calcium mobilization and MAPK1/MAPK3 (ERK1/2) phosphorylation too. Acts also as a receptor for TAFA1, mediates its effects on neuronal stem-cell proliferation and differentiation via the activation of ROCK/ERK and ROCK/STAT3 signaling pathway. The polypeptide is Chemerin-like receptor 2 (CMKLR2) (Macaca mulatta (Rhesus macaque)).